A 910-amino-acid polypeptide reads, in one-letter code: Valine--tRNA ligase (910 aa).

Residues 46-56 carry the 'HIGH' region motif; sequence PNVTGSLHMGH. Positions 539–543 match the 'KMSKS' region motif; sequence KMSKS. Position 542 (K542) interacts with ATP. The stretch at 845-909 forms a coiled coil; that stretch reads DLDILRNKIQ…QMLQERLKML (65 aa).

Belongs to the class-I aminoacyl-tRNA synthetase family. ValS type 1 subfamily. In terms of assembly, monomer.

The protein localises to the cytoplasm. It catalyses the reaction tRNA(Val) + L-valine + ATP = L-valyl-tRNA(Val) + AMP + diphosphate. Catalyzes the attachment of valine to tRNA(Val). As ValRS can inadvertently accommodate and process structurally similar amino acids such as threonine, to avoid such errors, it has a 'posttransfer' editing activity that hydrolyzes mischarged Thr-tRNA(Val) in a tRNA-dependent manner. The sequence is that of Valine--tRNA ligase from Synechocystis sp. (strain ATCC 27184 / PCC 6803 / Kazusa).